A 512-amino-acid chain; its full sequence is Kelch repeat protein C2 (512 aa).

Positions 2-67 (ESVIFSINGE…IRWKKINITI (66 aa)) constitute a BTB domain. The 75-residue stretch at 102 to 176 (CIRMFNFSKR…LLKWIHKNPN (75 aa)) folds into the BACK domain. Kelch repeat units lie at residues 216 to 261 (IKHN…LHNC), 262 to 307 (LYII…VNDG), 309 to 354 (LYVI…FVND), 356 to 403 (IYVM…EYDG), 405 to 449 (IYVI…SCGD), and 452 to 498 (LIIA…THKS).

This sequence belongs to the poxviruses Kelch family.

The polypeptide is Kelch repeat protein C2 (Vaccinia virus (strain Western Reserve) (VACV)).